Consider the following 177-residue polypeptide: dCTP deaminase, dUMP-forming (177 aa).

DCTP contacts are provided by residues Arg-95 to Arg-100, Asp-112, Thr-120 to Glu-122, Gln-141, Tyr-155, and Gln-162. The active-site Proton donor/acceptor is Glu-122.

Belongs to the dCTP deaminase family. In terms of assembly, homotrimer.

It catalyses the reaction dCTP + 2 H2O = dUMP + NH4(+) + diphosphate. It participates in pyrimidine metabolism; dUMP biosynthesis; dUMP from dCTP: step 1/1. Its function is as follows. Bifunctional enzyme that catalyzes both the deamination of dCTP to dUTP and the hydrolysis of dUTP to dUMP without releasing the toxic dUTP intermediate. The polypeptide is dCTP deaminase, dUMP-forming (Hydrogenobaculum sp. (strain Y04AAS1)).